The chain runs to 448 residues: Glutamyl-tRNA reductase (448 aa).

Substrate contacts are provided by residues 49–52 (TCNR), Ser109, 114–116 (ETQ), and Gln120. The Nucleophile role is filled by Cys50. Residue 189-194 (GAGEMS) participates in NADP(+) binding.

This sequence belongs to the glutamyl-tRNA reductase family. In terms of assembly, homodimer.

The catalysed reaction is (S)-4-amino-5-oxopentanoate + tRNA(Glu) + NADP(+) = L-glutamyl-tRNA(Glu) + NADPH + H(+). It functions in the pathway porphyrin-containing compound metabolism; protoporphyrin-IX biosynthesis; 5-aminolevulinate from L-glutamyl-tRNA(Glu): step 1/2. In terms of biological role, catalyzes the NADPH-dependent reduction of glutamyl-tRNA(Glu) to glutamate 1-semialdehyde (GSA). The chain is Glutamyl-tRNA reductase from Staphylococcus aureus (strain NCTC 8325 / PS 47).